Consider the following 310-residue polypeptide: tRNA-cytidine(32) 2-sulfurtransferase (310 aa).

Positions 47-52 (SGGKDS) match the PP-loop motif motif. Positions 122, 125, and 213 each coordinate [4Fe-4S] cluster.

This sequence belongs to the TtcA family. Homodimer. Mg(2+) serves as cofactor. [4Fe-4S] cluster is required as a cofactor.

Its subcellular location is the cytoplasm. It catalyses the reaction cytidine(32) in tRNA + S-sulfanyl-L-cysteinyl-[cysteine desulfurase] + AH2 + ATP = 2-thiocytidine(32) in tRNA + L-cysteinyl-[cysteine desulfurase] + A + AMP + diphosphate + H(+). It participates in tRNA modification. In terms of biological role, catalyzes the ATP-dependent 2-thiolation of cytidine in position 32 of tRNA, to form 2-thiocytidine (s(2)C32). The sulfur atoms are provided by the cysteine/cysteine desulfurase (IscS) system. The chain is tRNA-cytidine(32) 2-sulfurtransferase from Cronobacter sakazakii (strain ATCC BAA-894) (Enterobacter sakazakii).